We begin with the raw amino-acid sequence, 133 residues long: Fluoride-specific ion channel FluC (133 aa).

The next 4 helical transmembrane spans lie at 4-24 (LLWIALGGSLGALCRYGLSVL), 35-55 (WGTLAANLVGCFLIGGLWVLA), 66-86 (VFIFTGGIGSLTTFSTYSLES), and 107-127 (VLGLVLVAIGAGCALFLLGGP). Positions 74 and 77 each coordinate Na(+).

It belongs to the fluoride channel Fluc/FEX (TC 1.A.43) family.

Its subcellular location is the cell inner membrane. It catalyses the reaction fluoride(in) = fluoride(out). Na(+) is not transported, but it plays an essential structural role and its presence is essential for fluoride channel function. Its function is as follows. Fluoride-specific ion channel. Important for reducing fluoride concentration in the cell, thus reducing its toxicity. This is Fluoride-specific ion channel FluC from Salinibacter ruber (strain DSM 13855 / M31).